The following is a 397-amino-acid chain: 8-amino-7-oxononanoate synthase (397 aa).

Substrate is bound at residue Arg23. 110-111 (GY) contributes to the pyridoxal 5'-phosphate binding site. His135 serves as a coordination point for substrate. Pyridoxal 5'-phosphate contacts are provided by Ser181, His209, and Thr237. An N6-(pyridoxal phosphate)lysine modification is found at Lys240. Thr354 lines the substrate pocket.

Belongs to the class-II pyridoxal-phosphate-dependent aminotransferase family. BioF subfamily. Homodimer. It depends on pyridoxal 5'-phosphate as a cofactor.

The catalysed reaction is 6-carboxyhexanoyl-[ACP] + L-alanine + H(+) = (8S)-8-amino-7-oxononanoate + holo-[ACP] + CO2. The protein operates within cofactor biosynthesis; biotin biosynthesis. Its function is as follows. Catalyzes the decarboxylative condensation of pimeloyl-[acyl-carrier protein] and L-alanine to produce 8-amino-7-oxononanoate (AON), [acyl-carrier protein], and carbon dioxide. The sequence is that of 8-amino-7-oxononanoate synthase from Anaeromyxobacter sp. (strain Fw109-5).